The sequence spans 327 residues: Undecaprenyl-phosphate 4-deoxy-4-formamido-L-arabinose transferase (327 aa).

The Cytoplasmic portion of the chain corresponds to 1-235 (MFDAAPIKKV…TCLTTTPLRL (235 aa)). The chain crosses the membrane as a helical span at residues 236–256 (LSLLGSVIAIGGFSLSVLLIV). Residues 257 to 269 (LRLALGPQWAAEG) lie on the Periplasmic side of the membrane. The helical transmembrane segment at 270–290 (VFMLFAVLFTFIGAQFIGMGL) threads the bilayer. The Cytoplasmic segment spans residues 291 to 327 (LGEYIGRIYNDVRARPRYFVQQVIYPESTPFTEESHQ).

The protein belongs to the glycosyltransferase 2 family.

The protein resides in the cell inner membrane. The catalysed reaction is UDP-4-deoxy-4-formamido-beta-L-arabinose + di-trans,octa-cis-undecaprenyl phosphate = 4-deoxy-4-formamido-alpha-L-arabinopyranosyl di-trans,octa-cis-undecaprenyl phosphate + UDP. It participates in glycolipid biosynthesis; 4-amino-4-deoxy-alpha-L-arabinose undecaprenyl phosphate biosynthesis; 4-amino-4-deoxy-alpha-L-arabinose undecaprenyl phosphate from UDP-4-deoxy-4-formamido-beta-L-arabinose and undecaprenyl phosphate: step 1/2. Its pathway is bacterial outer membrane biogenesis; lipopolysaccharide biosynthesis. Functionally, catalyzes the transfer of 4-deoxy-4-formamido-L-arabinose from UDP to undecaprenyl phosphate. The modified arabinose is attached to lipid A and is required for resistance to polymyxin and cationic antimicrobial peptides. This chain is Undecaprenyl-phosphate 4-deoxy-4-formamido-L-arabinose transferase, found in Salmonella agona (strain SL483).